The chain runs to 150 residues: Aspartate 1-decarboxylase (150 aa).

The active-site Schiff-base intermediate with substrate; via pyruvic acid is Ser24. Ser24 carries the pyruvic acid (Ser) modification. Thr56 is a substrate binding site. Tyr57 acts as the Proton donor in catalysis. Substrate is bound at residue 72–74 (GAA).

Belongs to the PanD family. In terms of assembly, heterooctamer of four alpha and four beta subunits. Pyruvate is required as a cofactor. In terms of processing, is synthesized initially as an inactive proenzyme, which is activated by self-cleavage at a specific serine bond to produce a beta-subunit with a hydroxyl group at its C-terminus and an alpha-subunit with a pyruvoyl group at its N-terminus.

Its subcellular location is the cytoplasm. The enzyme catalyses L-aspartate + H(+) = beta-alanine + CO2. Its pathway is cofactor biosynthesis; (R)-pantothenate biosynthesis; beta-alanine from L-aspartate: step 1/1. Catalyzes the pyruvoyl-dependent decarboxylation of aspartate to produce beta-alanine. This is Aspartate 1-decarboxylase from Xanthobacter autotrophicus (strain ATCC BAA-1158 / Py2).